The chain runs to 488 residues: UDP-N-acetylmuramate--L-alanine ligase (488 aa).

129–135 (GSHGKTT) contributes to the ATP binding site.

Belongs to the MurCDEF family.

The protein resides in the cytoplasm. It carries out the reaction UDP-N-acetyl-alpha-D-muramate + L-alanine + ATP = UDP-N-acetyl-alpha-D-muramoyl-L-alanine + ADP + phosphate + H(+). The protein operates within cell wall biogenesis; peptidoglycan biosynthesis. Functionally, cell wall formation. This is UDP-N-acetylmuramate--L-alanine ligase from Prochlorococcus marinus (strain MIT 9313).